The chain runs to 204 residues: N-(5'-phosphoribosyl)anthranilate isomerase (204 aa).

It belongs to the TrpF family.

It carries out the reaction N-(5-phospho-beta-D-ribosyl)anthranilate = 1-(2-carboxyphenylamino)-1-deoxy-D-ribulose 5-phosphate. It participates in amino-acid biosynthesis; L-tryptophan biosynthesis; L-tryptophan from chorismate: step 3/5. In Bacillus cereus (strain Q1), this protein is N-(5'-phosphoribosyl)anthranilate isomerase.